The chain runs to 148 residues: 3-dehydroquinate dehydratase (148 aa).

Catalysis depends on Tyr-23, which acts as the Proton acceptor. Residues Asn-74, His-80, and Asp-87 each contribute to the substrate site. His-100 serves as the catalytic Proton donor. Substrate is bound by residues 101 to 102 (IS) and Arg-111.

The protein belongs to the type-II 3-dehydroquinase family. Homododecamer.

The enzyme catalyses 3-dehydroquinate = 3-dehydroshikimate + H2O. It functions in the pathway metabolic intermediate biosynthesis; chorismate biosynthesis; chorismate from D-erythrose 4-phosphate and phosphoenolpyruvate: step 3/7. Its function is as follows. Catalyzes a trans-dehydration via an enolate intermediate. In Caldanaerobacter subterraneus subsp. tengcongensis (strain DSM 15242 / JCM 11007 / NBRC 100824 / MB4) (Thermoanaerobacter tengcongensis), this protein is 3-dehydroquinate dehydratase.